The sequence spans 115 residues: uncharacterized protein (115 aa).

3 helical membrane passes run Leu-23–Ala-43, Ala-63–Val-83, and Asn-90–Ala-110.

The protein localises to the cell membrane. This is an uncharacterized protein from Mycobacterium bovis (strain ATCC BAA-935 / AF2122/97).